The primary structure comprises 305 residues: Elongation factor Ts (305 aa).

Residues 79–82 form an involved in Mg(2+) ion dislocation from EF-Tu region; sequence TDFV.

It belongs to the EF-Ts family.

It localises to the cytoplasm. Associates with the EF-Tu.GDP complex and induces the exchange of GDP to GTP. It remains bound to the aminoacyl-tRNA.EF-Tu.GTP complex up to the GTP hydrolysis stage on the ribosome. This Brucella anthropi (strain ATCC 49188 / DSM 6882 / CCUG 24695 / JCM 21032 / LMG 3331 / NBRC 15819 / NCTC 12168 / Alc 37) (Ochrobactrum anthropi) protein is Elongation factor Ts.